Here is a 450-residue protein sequence, read N- to C-terminus: Dol-P-Glc:Glc(2)Man(9)GlcNAc(2)-PP-Dol alpha-1,2-glucosyltransferase (450 aa).

Residues 12-32 traverse the membrane as a helical segment; sequence ISIISKYVAIVIFLIFVIIMF. An N-linked (GlcNAc...) asparagine glycan is attached at Asn-34. 4 helical membrane passes run 158–178, 190–210, 243–263, and 273–293; these read YFLF…LGLI, ALVG…IAFI, LLGY…NGGI, and IELH…FTIP. A glycan (N-linked (GlcNAc...) asparagine) is linked at Asn-297. The next 4 helical transmembrane spans lie at 312-332, 357-377, 384-404, and 429-449; these read IILN…FTIV, LKPL…SSLI, FIGI…SPLF, and FIWL…KGII.

This sequence belongs to the ALG10 glucosyltransferase family.

It is found in the endoplasmic reticulum membrane. The enzyme catalyses an alpha-D-Glc-(1-&gt;3)-alpha-D-Glc-(1-&gt;3)-alpha-D-Man-(1-&gt;2)-alpha-D-Man-(1-&gt;2)-alpha-D-Man-(1-&gt;3)-[alpha-D-Man-(1-&gt;2)-alpha-D-Man-(1-&gt;3)-[alpha-D-Man-(1-&gt;2)-alpha-D-Man-(1-&gt;6)]-alpha-D-Man-(1-&gt;6)]-beta-D-Man-(1-&gt;4)-beta-D-GlcNAc-(1-&gt;4)-alpha-D-GlcNAc-diphospho-di-trans,poly-cis-dolichol + a di-trans,poly-cis-dolichyl beta-D-glucosyl phosphate = a alpha-D-Glc-(1-&gt;2)-alpha-D-Glc-(1-&gt;3)-alpha-D-Glc-(1-&gt;3)-alpha-D-Man-(1-&gt;2)-alpha-D-Man-(1-&gt;2)-alpha-D-Man-(1-&gt;3)-[alpha-D-Man-(1-&gt;2)-alpha-D-Man-(1-&gt;3)-[alpha-D-Man-(1-&gt;2)-alpha-D-Man-(1-&gt;6)]-alpha-D-Man-(1-&gt;6)]-beta-D-Man-(1-&gt;4)-beta-D-GlcNAc-(1-&gt;4)-alpha-D-GlcNAc-diphospho-di-trans,poly-cis-dolichol + a di-trans,poly-cis-dolichyl phosphate + H(+). It functions in the pathway protein modification; protein glycosylation. Its function is as follows. Dol-P-Glc:Glc(2)Man(9)GlcNAc(2)-PP-Dol alpha-1,2-glucosyltransferase that operates in the biosynthetic pathway of dolichol-linked oligosaccharides, the glycan precursors employed in protein asparagine (N)-glycosylation. The assembly of dolichol-linked oligosaccharides begins on the cytosolic side of the endoplasmic reticulum membrane and finishes in its lumen. The sequential addition of sugars to dolichol pyrophosphate produces dolichol-linked oligosaccharides containing fourteen sugars, including two GlcNAcs, nine mannoses and three glucoses. Once assembled, the oligosaccharide is transferred from the lipid to nascent proteins by oligosaccharyltransferases. In the lumen of the endoplasmic reticulum, adds the third and last glucose residue from dolichyl phosphate glucose (Dol-P-Glc) onto the lipid-linked oligosaccharide intermediate Glc(2)Man(9)GlcNAc(2)-PP-Dol to produce Glc(3)Man(9)GlcNAc(2)-PP-Dol. This is Dol-P-Glc:Glc(2)Man(9)GlcNAc(2)-PP-Dol alpha-1,2-glucosyltransferase (DIE2) from Candida albicans (strain SC5314 / ATCC MYA-2876) (Yeast).